The following is a 76-amino-acid chain: Exodeoxyribonuclease 7 small subunit (76 aa).

Belongs to the XseB family. Heterooligomer composed of large and small subunits.

Its subcellular location is the cytoplasm. The enzyme catalyses Exonucleolytic cleavage in either 5'- to 3'- or 3'- to 5'-direction to yield nucleoside 5'-phosphates.. Functionally, bidirectionally degrades single-stranded DNA into large acid-insoluble oligonucleotides, which are then degraded further into small acid-soluble oligonucleotides. The polypeptide is Exodeoxyribonuclease 7 small subunit (Bacillus cytotoxicus (strain DSM 22905 / CIP 110041 / 391-98 / NVH 391-98)).